Consider the following 122-residue polypeptide: MFLRSTFVAALVACLAYIHLGDATEAMPKVQIYSRNVGELGKPNTLICHVSGFHPPNIKLQLLKNDVEIEGAQQSDLAFHQGWHFHLTKSVAFTPKEGEHYSCKVEHSTLREATRFTWTPDM.

Residues 1-23 (MFLRSTFVAALVACLAYIHLGDA) form the signal peptide. The 90-residue stretch at 28–117 (PKVQIYSRNV…STLREATRFT (90 aa)) folds into the Ig-like C1-type domain. Cysteine 48 and cysteine 103 are oxidised to a cystine.

Belongs to the beta-2-microglobulin family. As to quaternary structure, heterodimer of an alpha chain and a beta chain. Beta-2-microglobulin is the beta-chain of major histocompatibility complex class I molecules.

It localises to the secreted. Component of the class I major histocompatibility complex (MHC). Involved in the presentation of peptide antigens to the immune system. The chain is Beta-2-microglobulin (b2m) from Acipenser baerii (Siberian sturgeon).